A 357-amino-acid polypeptide reads, in one-letter code: Histidinol-phosphate aminotransferase (357 aa).

Lysine 212 carries the N6-(pyridoxal phosphate)lysine modification.

Belongs to the class-II pyridoxal-phosphate-dependent aminotransferase family. Histidinol-phosphate aminotransferase subfamily. In terms of assembly, homodimer. Pyridoxal 5'-phosphate serves as cofactor.

It catalyses the reaction L-histidinol phosphate + 2-oxoglutarate = 3-(imidazol-4-yl)-2-oxopropyl phosphate + L-glutamate. The protein operates within amino-acid biosynthesis; L-histidine biosynthesis; L-histidine from 5-phospho-alpha-D-ribose 1-diphosphate: step 7/9. The protein is Histidinol-phosphate aminotransferase of Pectobacterium atrosepticum (strain SCRI 1043 / ATCC BAA-672) (Erwinia carotovora subsp. atroseptica).